Here is a 138-residue protein sequence, read N- to C-terminus: Oleosin G (138 aa).

3 helical membrane-spanning segments follow: residues Ile-14–Thr-34, Val-48–Ala-68, and Gly-69–Asn-89. The Proline-knot signature appears at Pro-47–Pro-58.

Belongs to the oleosin family. Expressed in megagametophytes (at protein level).

It localises to the lipid droplet. The protein resides in the membrane. This Pinus massoniana (Chinese red pine) protein is Oleosin G.